The primary structure comprises 249 residues: MKFSSGKSIIFATIASLALSAPVTYDTNSTAELQSPSSQEILGWSHATFPTIYQTCNETNARMLNAAFKDTAEITAYGKDRLLNYGVDDVYYKRWFGNGSIFTVMGVFEQLMEASKGAMLMRCDDIDGLCAANPNYYAGHHRQSAPAETVICDYFYTSKKPLSTICFEGTIVDVGPKHYAGIDMLHRYLHVPTMSMDGYVGEYAETLEEVVDYTQNNATYAVRNTDNYLYYLADVYSASVIPGGCLGNL.

Residues 1-20 form the signal peptide; the sequence is MKFSSGKSIIFATIASLALS. Residues Asn-28, Asn-57, Asn-98, and Asn-217 are each glycosylated (N-linked (GlcNAc...) asparagine).

The protein belongs to the ZPS1 family.

This chain is Protein ZPS1 (ZPS1), found in Saccharomyces cerevisiae (strain ATCC 204508 / S288c) (Baker's yeast).